Reading from the N-terminus, the 225-residue chain is 2-C-methyl-D-erythritol 4-phosphate cytidylyltransferase (225 aa).

The protein belongs to the IspD/TarI cytidylyltransferase family. IspD subfamily.

The catalysed reaction is 2-C-methyl-D-erythritol 4-phosphate + CTP + H(+) = 4-CDP-2-C-methyl-D-erythritol + diphosphate. The protein operates within isoprenoid biosynthesis; isopentenyl diphosphate biosynthesis via DXP pathway; isopentenyl diphosphate from 1-deoxy-D-xylulose 5-phosphate: step 2/6. Catalyzes the formation of 4-diphosphocytidyl-2-C-methyl-D-erythritol from CTP and 2-C-methyl-D-erythritol 4-phosphate (MEP). This is 2-C-methyl-D-erythritol 4-phosphate cytidylyltransferase from Cereibacter sphaeroides (strain ATCC 17029 / ATH 2.4.9) (Rhodobacter sphaeroides).